A 542-amino-acid chain; its full sequence is Pre-mRNA-splicing factor 38B (542 aa).

The segment covering 1 to 12 (MANNSPALTGNS) has biased composition (polar residues). Positions 1–41 (MANNSPALTGNSQPQHQAAAAVTQQQQQCGGGGGATKPAVS) are disordered. Position 2 is an N-acetylalanine (alanine 2). Serine 5 carries the phosphoserine modification. The span at 13–28 (QPQHQAAAAVTQQQQQ) shows a compositional bias: low complexity. Position 228 is an N6-acetyllysine (lysine 228). A disordered region spans residues 233-542 (QIKTRPRKIK…KEHKSKDETV (310 aa)). Basic and acidic residues predominate over residues 244–256 (DGKEGIEEIDRHV). Basic residues predominate over residues 257-285 (ERRRSRSPRRSLSPRRSPRRSRSRSHHRE). Phosphoserine is present on residues serine 289, serine 291, serine 319, and serine 321. Residues 292 to 328 (FDRELEREKERQRLEREAKEREKERRRSRSIDRGLDR) show a composition bias toward basic and acidic residues. Residues 293 to 322 (DRELEREKERQRLEREAKEREKERRRSRSI) are a coiled coil. A compositionally biased stretch (basic residues) spans 329-345 (RRSRSRERHRSRSRSRD). The span at 346–419 (RKGDRRDRDR…DRRHRDDKKE (74 aa)) shows a compositional bias: basic and acidic residues. Residues 420–447 (SKKKHSRSRSRERKHRSRSRNAGKRSRS) are compositionally biased toward basic residues. Serine 445 is subject to Phosphoserine. Residues 448–465 (RSKDKSSRHKNESKEKAN) are compositionally biased toward basic and acidic residues. A phosphoserine mark is found at serine 470, serine 472, and serine 478. Basic and acidic residues-rich tracts occupy residues 478–491 (SVEK…PSRE) and 498–520 (RSQD…RQDH). A phosphoserine mark is found at serine 523, serine 525, and serine 530. The segment covering 530–542 (SQEKEHKSKDETV) has biased composition (basic and acidic residues).

It belongs to the PRP38 family.

The protein resides in the nucleus. In terms of biological role, may be required for pre-mRNA splicing. This is Pre-mRNA-splicing factor 38B (Prpf38b) from Mus musculus (Mouse).